The sequence spans 108 residues: MSEHIVNVTDASFEQDVLKADGPVLVDYWAEWCGPCKMIAPVLDEVARDYQGKLKVCKLNIDENQDTPPKYGVRGIPTLMLFKDGNVEATKVGALSKSQLAAFLDANI.

The Thioredoxin domain maps to 2 to 108; that stretch reads SEHIVNVTDA…QLAAFLDANI (107 aa). C33 and C36 are joined by a disulfide.

Belongs to the thioredoxin family.

In terms of biological role, participates in various redox reactions through the reversible oxidation of its active center dithiol to a disulfide and catalyzes dithiol-disulfide exchange reactions. The chain is Thioredoxin (trxA) from Pseudomonas aeruginosa (strain ATCC 15692 / DSM 22644 / CIP 104116 / JCM 14847 / LMG 12228 / 1C / PRS 101 / PAO1).